Consider the following 305-residue polypeptide: CRISPR-associated endonuclease Cas1 (305 aa).

A sufficient for cleavage of ssRNA, ssDNA and Holliday junction DNA region spans residues S96 to Q278. Residues E141, H208, and D221 each contribute to the Mg(2+) site. Residues Q278–S305 are disordered.

The protein belongs to the CRISPR-associated endonuclease Cas1 family. Homodimer. Part of the Cas1-Cas2 complex. Interacts with RecB, RecC, RuvB, CasC and CasE. Forms a hexamer with 2 Cas1 dimers sandwiching a Cas2 dimer. The DNA lies across a flat surface extending from 1 Cas1 dimer, across the Cas2 dimer and contacting the other Cas1 dimer. Only 1 Cas1 protein from each dimer is catalytic, the other interacts with the Cas2 dimer and possibly target DNA. Mg(2+) serves as cofactor.

It localises to the cytoplasm. With respect to regulation, nuclease activity partially inhibited by CasE. In terms of biological role, CRISPR (clustered regularly interspaced short palindromic repeat), is an adaptive immune system that provides protection against mobile genetic elements (viruses, transposable elements and conjugative plasmids). CRISPR clusters contain sequences complementary to antecedent mobile elements and target invading nucleic acids. CRISPR clusters are transcribed and processed into CRISPR RNA (crRNA). The Cas1-Cas2 complex is involved in CRISPR adaptation, the first stage of CRISPR immunity, being required for the addition/removal of CRISPR spacers at the leader end of the CRISPR locus. The Cas1-Cas2 complex introduces staggered nicks into both strands of the CRISPR array near the leader repeat and joins the 5'-ends of the repeat strands with the 3'-ends of the new spacer sequence. Spacer DNA integration requires supercoiled target DNA and 3'-OH ends on the inserted (spacer) DNA and probably initiates with a nucleophilic attack of the C 3'-OH end of the protospacer on the minus strand of the first repeat sequence. Expression of Cas1-Cas2 in a strain lacking both genes permits spacer acquisition. Non-specifically binds DNA; the Cas1-Cas2 complex preferentially binds CRISPR-locus DNA. Highest binding is seen to a dual forked DNA complex with 3'-overhangs and a protospacer-adjacent motif-complement specifically positioned. The protospacer DNA lies across a flat surface extending from 1 Cas1 dimer, across the Cas2 dimer and contacting the other Cas1 dimer; the 23 bp-long ds section of the DNA is bracketed by 1 Tyr-22 from each of the Cas1 dimers. Cas1 cuts within the 3'-overhang, to generate a 33-nucleotide DNA that is probably incorporated into the CRISPR leader by a cut-and-paste mechanism. Cas1 alone endonucleolytically cleaves linear ssRNA, ssDNA and short (34 base) dsDNA as well as branched DNA substrates such as Holliday junctions, replication forks and 5'-flap DNA substrates. In vitro catalyzes a concerted transesterification reaction on branched DNA, as would be expected during integration of protospacers into the CRISPR leader sequence; Cas2 is not required in vitro. This reaction requires a 3'-OH group at the branch point. Genetic interactions suggest Cas1 interacts with components of the RecBC and RuvB DNA repair systems. The chain is CRISPR-associated endonuclease Cas1 (ygbT) from Escherichia coli (strain K12).